Reading from the N-terminus, the 120-residue chain is UPF0344 protein LMHCC_0278 (120 aa).

A run of 4 helical transmembrane segments spans residues 3–23 (GYIHLISWVAIVVLTVTALLI), 33–53 (MLQMINRVFYILVILSGIMMV), 62–82 (ILAIFKILMGIIVIGVVEMLL), and 92–112 (GMFLMIFVIVVVITISLGFYL).

This sequence belongs to the UPF0344 family.

The protein resides in the cell membrane. This Listeria monocytogenes serotype 4a (strain HCC23) protein is UPF0344 protein LMHCC_0278.